Reading from the N-terminus, the 116-residue chain is Aspartate 1-decarboxylase (116 aa).

Serine 25 (schiff-base intermediate with substrate; via pyruvic acid) is an active-site residue. A Pyruvic acid (Ser) modification is found at serine 25. Substrate is bound at residue threonine 57. Tyrosine 58 functions as the Proton donor in the catalytic mechanism. 73-75 is a substrate binding site; the sequence is GAA.

The protein belongs to the PanD family. In terms of assembly, heterooctamer of four alpha and four beta subunits. It depends on pyruvate as a cofactor. Post-translationally, is synthesized initially as an inactive proenzyme, which is activated by self-cleavage at a specific serine bond to produce a beta-subunit with a hydroxyl group at its C-terminus and an alpha-subunit with a pyruvoyl group at its N-terminus.

The protein resides in the cytoplasm. It catalyses the reaction L-aspartate + H(+) = beta-alanine + CO2. It functions in the pathway cofactor biosynthesis; (R)-pantothenate biosynthesis; beta-alanine from L-aspartate: step 1/1. In terms of biological role, catalyzes the pyruvoyl-dependent decarboxylation of aspartate to produce beta-alanine. The chain is Aspartate 1-decarboxylase from Fervidobacterium nodosum (strain ATCC 35602 / DSM 5306 / Rt17-B1).